The following is a 364-amino-acid chain: Aminomethyltransferase (364 aa).

Belongs to the GcvT family. In terms of assembly, the glycine cleavage system is composed of four proteins: P, T, L and H.

It carries out the reaction N(6)-[(R)-S(8)-aminomethyldihydrolipoyl]-L-lysyl-[protein] + (6S)-5,6,7,8-tetrahydrofolate = N(6)-[(R)-dihydrolipoyl]-L-lysyl-[protein] + (6R)-5,10-methylene-5,6,7,8-tetrahydrofolate + NH4(+). The glycine cleavage system catalyzes the degradation of glycine. This is Aminomethyltransferase from Escherichia coli O157:H7.